A 370-amino-acid chain; its full sequence is Seipin (370 aa).

Positions Met-1–Gly-18 are cleaved as a signal peptide. Over Arg-19–Leu-55 the chain is Cytoplasmic. The chain crosses the membrane as a helical span at residues Gly-56–Phe-76. Residues Tyr-77–Pro-251 lie on the Lumenal side of the membrane. A helical transmembrane segment spans residues Val-252–Leu-272. Over Ser-273–His-370 the chain is Cytoplasmic. The segment at Lys-346–His-370 is disordered. Residues Gly-350–Arg-359 show a composition bias toward basic and acidic residues.

As to expression, widely expressed, with highest levels detected in fat body, moderate levels detected in salivary gland, midgut and muscle, and weak expression detected in brain.

The protein localises to the endoplasmic reticulum membrane. It is found in the lipid droplet. In terms of biological role, acts as a tissue-autonomous lipid modulator, preventing ectopic lipid accumulation in salivary gland (a non-adipose tissue) and in promoting lipid storage in fat tissue. Required for the growth and maturation of small nascent lipid droplets (LDs) into larger mature LDs. In Drosophila melanogaster (Fruit fly), this protein is Seipin.